Reading from the N-terminus, the 991-residue chain is Glutamate receptor 1 (991 aa).

Positions 1–27 (MHSRLKFLAYLHFICASSIFWPEFSSA) are cleaved as a signal peptide. Over 28 to 611 (QQQQQTVSLT…VFSFLNPLSQ (584 aa)) the chain is Extracellular. 4 N-linked (GlcNAc...) asparagine glycosylation sites follow: Asn-67, Asn-195, Asn-208, and Asn-281. 2 disordered regions span residues 300–321 (DSRK…GPNS) and 354–379 (FRSN…NESS). Polar residues predominate over residues 308 to 318 (SGQSQSQNAGG). A compositionally biased stretch (low complexity) spans 365-379 (GGSSSSSATGTNESS). Asn-376, Asn-385, Asn-426, Asn-437, and Asn-477 each carry an N-linked (GlcNAc...) asparagine glycan. Residues 612-632 (EIWISVILSYVGVSFVLYFVT) traverse the membrane as a helical segment. Topologically, residues 633-710 (RFPPYEWRIV…PSIAGRIAAA (78 aa)) are cytoplasmic. A helical transmembrane segment spans residues 711–731 (VWWFFTIILISSYTANLAAFL). At 732-895 (TVERMVAPIK…STPNELSLSN (164 aa)) the chain is on the extracellular side. A helical transmembrane segment spans residues 896-916 (VAGIYYILIGGLLLAVIVAIM). The Cytoplasmic segment spans residues 917 to 991 (EFFCRNKTPQ…ASNVRYQYSM (75 aa)).

The protein belongs to the glutamate-gated ion channel (TC 1.A.10.1) family. As to quaternary structure, homooligomer. In terms of tissue distribution, central nervous system.

The protein resides in the cell membrane. It localises to the postsynaptic cell membrane. In terms of biological role, receptor for glutamate. L-glutamate acts as an excitatory neurotransmitter at many synapses in the central nervous system. The postsynaptic actions of Glu are mediated by a variety of receptors that are named according to their selective agonists. Forms ligand-gated ion channels which are activated by kainate. In Drosophila melanogaster (Fruit fly), this protein is Glutamate receptor 1 (GluRIA).